We begin with the raw amino-acid sequence, 347 residues long: 3,4-dihydroxy-2-butanone 4-phosphate synthase (347 aa).

A DHBP synthase region spans residues 1–200 (MPLNRVREAI…ISDLIEYRMQ (200 aa)). D-ribulose 5-phosphate contacts are provided by residues 27-28 (RE), Asp32, 139-143 (RTGHT), and Glu163. A Mg(2+)-binding site is contributed by Glu28. A Mg(2+)-binding site is contributed by His142. Positions 201–347 (NEMLILIKER…IVLQGGPIQL (147 aa)) are GTP cyclohydrolase II-like.

In the N-terminal section; belongs to the DHBP synthase family. It in the C-terminal section; belongs to the GTP cyclohydrolase II family. Mg(2+) serves as cofactor. Mn(2+) is required as a cofactor.

The enzyme catalyses D-ribulose 5-phosphate = (2S)-2-hydroxy-3-oxobutyl phosphate + formate + H(+). It participates in cofactor biosynthesis; riboflavin biosynthesis; 2-hydroxy-3-oxobutyl phosphate from D-ribulose 5-phosphate: step 1/1. Its function is as follows. Catalyzes the conversion of D-ribulose 5-phosphate to formate and 3,4-dihydroxy-2-butanone 4-phosphate. This is 3,4-dihydroxy-2-butanone 4-phosphate synthase (ribB) from Wolinella succinogenes (strain ATCC 29543 / DSM 1740 / CCUG 13145 / JCM 31913 / LMG 7466 / NCTC 11488 / FDC 602W) (Vibrio succinogenes).